The primary structure comprises 317 residues: Egg-laying defective protein 26 (317 aa).

The region spanning 156–277 is the LRAT domain; the sequence is EVNVSGVKFY…CSTGVPFSYD (122 aa). Residues histidine 166 and histidine 178 contribute to the active site. Cysteine 261 (acyl-thioester intermediate) is an active-site residue.

In terms of tissue distribution, highly expressed in the cells of the spermatheca, the mouth, and the lining of the pharynx, the rectum, and the excretory canal. Also expressed in the pharyngeal intestinal junction cell.

It localises to the apical cell membrane. In terms of biological role, putative acyltransferase. Plays a role in the morphogenesis of a vulval toroid cell, vulF, which is located where the vulva and the uterus connect. Not required for specifying vulval cell fate. The protein is Egg-laying defective protein 26 of Caenorhabditis elegans.